We begin with the raw amino-acid sequence, 521 residues long: MEELQRYLEKGRSRQQHFLYPLLFQEYIYALAHDHGLNSSIFYEPVEIISYDNKSSLALVKRLITRIYQQNYLISSVNDSNQNQFLGHNAFFYSHFFSQIISESFAIIVEIPFSLRLVSFFEEKEIPIYHNLRSIHSIFPFLEGKLSHLNYVSDILIPHPIHMEILVQTLQCRVQDVPFLHLLRFFLHEYHNWNSLLITQNKSIYFFSKENKRIFRLLYNSYVFECEFLLVFFRKQSYYLRLTSSGTFLERTHFYRKIEHLPIEHFFVVCRNYFHRTRWFFKNPFMHYVRYQRKAILASRGTHFLMKKWKYHFVNFWQYYFHFWSRPYRIHINHLSNYSFYFLGYLSSLLINSSAVRNQMLENSFLIDTVTNKFDTIVPVILLIRSLSKAKFCTVSGHPISKPIWADLSDSDIIDRFGRICRNLSHYHSGSSKKQDLYRIKYILRLSCARTLARKHKSTVRTFLRRLGSGLLEEFFTEEEQVLSLIFPKRTPFTLHGSHRERIWYLDIICINDLVNHSXLS.

It belongs to the intron maturase 2 family. MatK subfamily.

The protein localises to the plastid. It is found in the chloroplast. Usually encoded in the trnK tRNA gene intron. Probably assists in splicing its own and other chloroplast group II introns. The chain is Maturase K from Kniphofia uvaria (Red-hot poker).